The primary structure comprises 199 residues: MNNIIPTQEEIAARVKALESILIEQNVISTAMVDRMVEIYEEEVGPKLGAKVVAKAWTDSEFKARLLDDATEACKELGISGLQGEDMVVLEDTDDVHHAIVCTLCSCYPWPVLGLPPNWYKEPAYRARIVREPRTVLSEEFNYHLPESTEIRIWDTSSEMRYWVLPQRPEGTEGWSEEQLAELVTRDSMIGVGPVKTPA.

Residues Cys-102, Cys-105, Ser-106, and Cys-107 each coordinate Fe(3+). Cys-105 carries the post-translational modification Cysteine sulfinic acid (-SO2H). Position 107 is a cysteine sulfenic acid (-SOH) (Cys-107).

The protein belongs to the nitrile hydratase subunit alpha family. Heterodimer of an alpha and a beta chain. The cofactor is Fe(3+). In terms of processing, oxidation on Cys-105 is essential for the activity. Post-translationally, oxidation on Cys-107 stabilizes the Fe-NO ligand coordinated in the inactive form.

The enzyme catalyses an aliphatic primary amide = an aliphatic nitrile + H2O. Inactivated by oxidation of Cys-107 to a sulfenic acid. Its function is as follows. NHase catalyzes the hydration of various nitrile compounds to the corresponding amides. Industrial production of acrylamide is now being developed using some of the enzymes of this class. The chain is Nitrile hydratase subunit alpha (nthA) from Rhodococcus sp.